A 397-amino-acid polypeptide reads, in one-letter code: Protein-glutamate methylesterase/protein-glutamine glutaminase of group 2 operon (397 aa).

Residues 21–139 (RVMIVDDSVV…EASAADTFHH (119 aa)) form the Response regulatory domain. 4-aspartylphosphate is present on aspartate 72. In terms of domain architecture, CheB-type methylesterase spans 199–388 (PFSTLAPKVL…LPLNQIGAKV (190 aa)). Catalysis depends on residues serine 213, histidine 241, and aspartate 337.

It belongs to the CheB family. Phosphorylated by CheA. Phosphorylation of the N-terminal regulatory domain activates the methylesterase activity.

It localises to the cytoplasm. It carries out the reaction [protein]-L-glutamate 5-O-methyl ester + H2O = L-glutamyl-[protein] + methanol + H(+). The catalysed reaction is L-glutaminyl-[protein] + H2O = L-glutamyl-[protein] + NH4(+). Its function is as follows. Involved in chemotaxis. Part of a chemotaxis signal transduction system that modulates chemotaxis in response to various stimuli. Catalyzes the demethylation of specific methylglutamate residues introduced into the chemoreceptors (methyl-accepting chemotaxis proteins or MCP) by CheR. Also mediates the irreversible deamidation of specific glutamine residues to glutamic acid. This is Protein-glutamate methylesterase/protein-glutamine glutaminase of group 2 operon from Bradyrhizobium diazoefficiens (strain JCM 10833 / BCRC 13528 / IAM 13628 / NBRC 14792 / USDA 110).